The primary structure comprises 269 residues: Thiazole synthase (269 aa).

K112 functions as the Schiff-base intermediate with DXP in the catalytic mechanism. 1-deoxy-D-xylulose 5-phosphate-binding positions include G173, 199-200 (AG), and 221-222 (NT).

Belongs to the ThiG family. As to quaternary structure, homotetramer. Forms heterodimers with either ThiH or ThiS.

It localises to the cytoplasm. It catalyses the reaction [ThiS sulfur-carrier protein]-C-terminal-Gly-aminoethanethioate + 2-iminoacetate + 1-deoxy-D-xylulose 5-phosphate = [ThiS sulfur-carrier protein]-C-terminal Gly-Gly + 2-[(2R,5Z)-2-carboxy-4-methylthiazol-5(2H)-ylidene]ethyl phosphate + 2 H2O + H(+). Its pathway is cofactor biosynthesis; thiamine diphosphate biosynthesis. Catalyzes the rearrangement of 1-deoxy-D-xylulose 5-phosphate (DXP) to produce the thiazole phosphate moiety of thiamine. Sulfur is provided by the thiocarboxylate moiety of the carrier protein ThiS. In vitro, sulfur can be provided by H(2)S. This is Thiazole synthase from Caulobacter vibrioides (strain ATCC 19089 / CIP 103742 / CB 15) (Caulobacter crescentus).